We begin with the raw amino-acid sequence, 266 residues long: 4-hydroxy-tetrahydrodipicolinate reductase (266 aa).

Residue 10–15 (GPRGRM) coordinates NAD(+). Residue K38 coordinates NADP(+). NAD(+)-binding positions include 99–101 (GTT) and 125–128 (APNF). Catalysis depends on H155, which acts as the Proton donor/acceptor. H156 lines the (S)-2,3,4,5-tetrahydrodipicolinate pocket. Residue K159 is the Proton donor of the active site. 165-166 (GT) contacts (S)-2,3,4,5-tetrahydrodipicolinate.

This sequence belongs to the DapB family.

The protein localises to the cytoplasm. The enzyme catalyses (S)-2,3,4,5-tetrahydrodipicolinate + NAD(+) + H2O = (2S,4S)-4-hydroxy-2,3,4,5-tetrahydrodipicolinate + NADH + H(+). It carries out the reaction (S)-2,3,4,5-tetrahydrodipicolinate + NADP(+) + H2O = (2S,4S)-4-hydroxy-2,3,4,5-tetrahydrodipicolinate + NADPH + H(+). Its pathway is amino-acid biosynthesis; L-lysine biosynthesis via DAP pathway; (S)-tetrahydrodipicolinate from L-aspartate: step 4/4. Catalyzes the conversion of 4-hydroxy-tetrahydrodipicolinate (HTPA) to tetrahydrodipicolinate. In Bacillus cereus (strain ZK / E33L), this protein is 4-hydroxy-tetrahydrodipicolinate reductase.